Consider the following 499-residue polypeptide: MARKMLVDGEIDKVAADEANATHYDFDLFVIGAGSGGVRAARFSANHGAKVGICELPFHPISSEEIGGVGGTCVIRGCVPKKILVYGATYGGELEDAKNYGWEINEKVDFTWKKLLQKKTDEILRLNNIYKRLLANAAVKLYEGEGRVVGPNEVEVRQIDGTKISYTAKHILIATGSRAQKPNIPGHELAITSDEALSLEEFPKRAIVLGGGYIAVEFASIWRGMGATVDLFFRKELPLRGFDDEMRALVARNLEGRGVNLHPQTSLTQLTKTDQGIKVISSHGEEFVADVVLFATGRSPNTKRLNLEAVGVELDQAGAVKVDEYSRTNIPSIWAVGDATNRINLTPVALMEATCFANTAFGGKPTKAEYSNVACAVFCIPPLAVVGLSEEEAVEQATGDILVFTSGFNPMKNTISGRQEKTLMKLIVDEKSDKVIGASMCGPDAAEIMQGIAIALKCGATKAQFDSTVGIHPSSAEEFVTMRSVTRRIAHKPKPKTNL.

The FAD site is built by Ser-35, Gly-36, Glu-55, Thr-72, Cys-73, and Lys-81. Residue Ser-35 participates in glutathione binding. Cys-73 and Cys-78 are oxidised to a cystine. Tyr-130 provides a ligand contact to glutathione. Gly-146 is a binding site for FAD. NADP(+) is bound by residues Gly-211, Ile-214, Glu-217, Arg-234, Arg-240, and Gly-297. FAD is bound by residues Asp-338 and Thr-346. Position 376 (Ala-376) interacts with NADP(+). Residue His-472 participates in FAD binding. His-472 functions as the Proton acceptor in the catalytic mechanism.

It belongs to the class-I pyridine nucleotide-disulfide oxidoreductase family. As to quaternary structure, homodimer. Requires FAD as cofactor.

It is found in the cytoplasm. It catalyses the reaction 2 glutathione + NADP(+) = glutathione disulfide + NADPH + H(+). In terms of biological role, catalyzes the reduction of glutathione disulfide (GSSG) to reduced glutathione (GSH). Constitutes the major mechanism to maintain a high GSH:GSSG ratio in the cytosol. In Arabidopsis thaliana (Mouse-ear cress), this protein is Glutathione reductase, cytosolic.